The following is a 29-amino-acid chain: Cytochrome b6-f complex subunit 8 (29 aa).

The chain crosses the membrane as a helical span at residues 3-23; that stretch reads IVSLGWAFLMVVFSFSLSLVV.

The protein belongs to the PetN family. The 4 large subunits of the cytochrome b6-f complex are cytochrome b6, subunit IV (17 kDa polypeptide, PetD), cytochrome f and the Rieske protein, while the 4 small subunits are PetG, PetL, PetM and PetN. The complex functions as a dimer.

It localises to the plastid. The protein resides in the chloroplast thylakoid membrane. In terms of biological role, component of the cytochrome b6-f complex, which mediates electron transfer between photosystem II (PSII) and photosystem I (PSI), cyclic electron flow around PSI, and state transitions. In Chlorokybus atmophyticus (Soil alga), this protein is Cytochrome b6-f complex subunit 8.